Reading from the N-terminus, the 290-residue chain is GTPase Era (290 aa).

One can recognise an Era-type G domain in the interval 2–169; it reads KSGFAAILGR…KNKIYENFSE (168 aa). The interval 10 to 17 is G1; the sequence is GRPSTGKS. 10 to 17 is a GTP binding site; that stretch reads GRPSTGKS. The G2 stretch occupies residues 36-40; that stretch reads QTTRN. The segment at 57–60 is G3; it reads DTPG. Residues 57-61 and 119-122 each bind GTP; these read DTPGF and NKVD. Residues 119 to 122 are G4; it reads NKVD. The interval 148–150 is G5; the sequence is ISA. The region spanning 200 to 276 is the KH type-2 domain; sequence LKEELPYSLY…NLFLQVKLKK (77 aa).

It belongs to the TRAFAC class TrmE-Era-EngA-EngB-Septin-like GTPase superfamily. Era GTPase family. Monomer.

It localises to the cytoplasm. The protein localises to the cell inner membrane. Functionally, an essential GTPase that binds both GDP and GTP, with rapid nucleotide exchange. Plays a role in 16S rRNA processing and 30S ribosomal subunit biogenesis and possibly also in cell cycle regulation and energy metabolism. The sequence is that of GTPase Era from Borrelia garinii subsp. bavariensis (strain ATCC BAA-2496 / DSM 23469 / PBi) (Borreliella bavariensis).